We begin with the raw amino-acid sequence, 462 residues long: Elongation factor 1-alpha 1 (462 aa).

N,N,N-trimethylglycine is present on Gly-2. The 238-residue stretch at 5 to 242 (KTHINIVVIG…DCILPPTRPT (238 aa)) folds into the tr-type G domain. The segment at 14-21 (GHVDSGKS) is G1. 14–21 (GHVDSGKS) is a binding site for GTP. Residues 70–74 (GITID) are G2. The G3 stretch occupies residues 91-94 (DAPG). GTP contacts are provided by residues 153 to 156 (NKMD) and 194 to 196 (SGW). The G4 stretch occupies residues 153 to 156 (NKMD). The interval 194 to 196 (SGW) is G5. Residues Glu-301 and Glu-374 each carry the 5-glutamyl glycerylphosphorylethanolamine modification.

Belongs to the TRAFAC class translation factor GTPase superfamily. Classic translation factor GTPase family. EF-Tu/EF-1A subfamily.

The protein resides in the cytoplasm. It carries out the reaction GTP + H2O = GDP + phosphate + H(+). Its function is as follows. Translation elongation factor that catalyzes the GTP-dependent binding of aminoacyl-tRNA (aa-tRNA) to the A-site of ribosomes during the elongation phase of protein synthesis. Base pairing between the mRNA codon and the aa-tRNA anticodon promotes GTP hydrolysis, releasing the aa-tRNA from EEF1A1 and allowing its accommodation into the ribosome. The growing protein chain is subsequently transferred from the P-site peptidyl tRNA to the A-site aa-tRNA, extending it by one amino acid through ribosome-catalyzed peptide bond formation. This chain is Elongation factor 1-alpha 1 (EEF1A), found in Gallus gallus (Chicken).